A 463-amino-acid chain; its full sequence is Argininosuccinate lyase (463 aa).

Belongs to the lyase 1 family. Argininosuccinate lyase subfamily.

It is found in the cytoplasm. The catalysed reaction is 2-(N(omega)-L-arginino)succinate = fumarate + L-arginine. The protein operates within amino-acid biosynthesis; L-arginine biosynthesis; L-arginine from L-ornithine and carbamoyl phosphate: step 3/3. The chain is Argininosuccinate lyase from Streptococcus pneumoniae (strain 70585).